The sequence spans 273 residues: Thymidylate synthase (273 aa).

Residue arginine 31 coordinates dUMP. Histidine 61 contacts (6R)-5,10-methylene-5,6,7,8-tetrahydrofolate. Residue 136-137 participates in dUMP binding; that stretch reads RR. The active-site Nucleophile is cysteine 156. Residues 176 to 179, asparagine 187, and 217 to 219 contribute to the dUMP site; these read RSAD and HIY. Aspartate 179 serves as a coordination point for (6R)-5,10-methylene-5,6,7,8-tetrahydrofolate. Position 272 (alanine 272) interacts with (6R)-5,10-methylene-5,6,7,8-tetrahydrofolate.

This sequence belongs to the thymidylate synthase family. Bacterial-type ThyA subfamily. Homodimer.

The protein localises to the cytoplasm. The catalysed reaction is dUMP + (6R)-5,10-methylene-5,6,7,8-tetrahydrofolate = 7,8-dihydrofolate + dTMP. Its pathway is pyrimidine metabolism; dTTP biosynthesis. Functionally, catalyzes the reductive methylation of 2'-deoxyuridine-5'-monophosphate (dUMP) to 2'-deoxythymidine-5'-monophosphate (dTMP) while utilizing 5,10-methylenetetrahydrofolate (mTHF) as the methyl donor and reductant in the reaction, yielding dihydrofolate (DHF) as a by-product. This enzymatic reaction provides an intracellular de novo source of dTMP, an essential precursor for DNA biosynthesis. The chain is Thymidylate synthase from Corynebacterium jeikeium (strain K411).